Here is a 220-residue protein sequence, read N- to C-terminus: Deoxyribose-phosphate aldolase 2 (220 aa).

The Proton donor/acceptor role is filled by Asp-89. The active-site Schiff-base intermediate with acetaldehyde is the Lys-151. Lys-180 acts as the Proton donor/acceptor in catalysis.

The protein belongs to the DeoC/FbaB aldolase family. DeoC type 1 subfamily.

It is found in the cytoplasm. The enzyme catalyses 2-deoxy-D-ribose 5-phosphate = D-glyceraldehyde 3-phosphate + acetaldehyde. It functions in the pathway carbohydrate degradation; 2-deoxy-D-ribose 1-phosphate degradation; D-glyceraldehyde 3-phosphate and acetaldehyde from 2-deoxy-alpha-D-ribose 1-phosphate: step 2/2. Its function is as follows. Catalyzes a reversible aldol reaction between acetaldehyde and D-glyceraldehyde 3-phosphate to generate 2-deoxy-D-ribose 5-phosphate. This is Deoxyribose-phosphate aldolase 2 from Staphylococcus aureus (strain N315).